Here is a 101-residue protein sequence, read N- to C-terminus: Urease subunit beta (101 aa).

Belongs to the urease beta subunit family. Heterotrimer of UreA (gamma), UreB (beta) and UreC (alpha) subunits. Three heterotrimers associate to form the active enzyme.

The protein localises to the cytoplasm. The enzyme catalyses urea + 2 H2O + H(+) = hydrogencarbonate + 2 NH4(+). The protein operates within nitrogen metabolism; urea degradation; CO(2) and NH(3) from urea (urease route): step 1/1. The sequence is that of Urease subunit beta from Paraburkholderia xenovorans (strain LB400).